Here is a 1261-residue protein sequence, read N- to C-terminus: Pentatricopeptide repeat-containing protein 5, mitochondrial (1261 aa).

15 PPR repeats span residues H365 to T404, N405 to I442, P443 to A479, S480 to D514, T550 to L584, H806 to N849, M852 to P886, R887 to P924, S925 to P959, T960 to P995, R996 to P1031, S1032 to I1068, D1109 to L1143, N1144 to K1179, and E1180 to L1214. A disordered region spans residues N1225–N1261. The span at L1237–N1261 shows a compositional bias: polar residues.

The protein localises to the mitochondrion. Functionally, mitochondrial RNA-binding protein that acts as a general negative regulator of mitochondrial translation. The protein is Pentatricopeptide repeat-containing protein 5, mitochondrial (ppr5) of Schizosaccharomyces pombe (strain 972 / ATCC 24843) (Fission yeast).